Here is a 360-residue protein sequence, read N- to C-terminus: DNA replication and repair protein RecF (360 aa).

Residue 33–40 coordinates ATP; the sequence is GENGSGKT.

It belongs to the RecF family.

Its subcellular location is the cytoplasm. Its function is as follows. The RecF protein is involved in DNA metabolism; it is required for DNA replication and normal SOS inducibility. RecF binds preferentially to single-stranded, linear DNA. It also seems to bind ATP. The polypeptide is DNA replication and repair protein RecF (Rickettsia typhi (strain ATCC VR-144 / Wilmington)).